The following is a 229-amino-acid chain: uncharacterized protein (229 aa).

The next 7 helical transmembrane spans lie at 21–41 (IYSL…LMLY), 56–76 (MIYY…SGAA), 83–103 (ALPI…FIIV), 109–129 (TVFQ…IIGV), 141–161 (AMFA…FIGS), 162–182 (GMMS…LIAS), and 202–222 (WAVA…ISLL).

This sequence belongs to the BI1 family.

The protein localises to the cell membrane. This is an uncharacterized protein from Streptococcus pyogenes serotype M6 (strain ATCC BAA-946 / MGAS10394).